The chain runs to 339 residues: Trace amine-associated receptor 1 (339 aa).

The Extracellular portion of the chain corresponds to 1–24; the sequence is MMPFCHNIINISCVKNNWSNDVRA. Cystine bridges form between Cys5–Cys178, Cys13–Cys88, and Cys96–Cys182. N-linked (GlcNAc...) asparagine glycosylation is found at Asn10 and Asn17. A helical transmembrane segment spans residues 25 to 49; sequence SLYSLMVLIILTTLVGNLIVIVSIS. Over 50-59 the chain is Cytoplasmic; that stretch reads HFKQLHTPTN. A helical membrane pass occupies residues 60–81; it reads WLIHSMATVDFLLGCLVMPYSM. Over 82–96 the chain is Extracellular; it reads VRSAEHCWYFGEVFC. The helical transmembrane segment at 97–119 threads the bilayer; it reads KIHTSTDIMLSSASIFHLSFISI. Asp103 provides a ligand contact to 2-phenylethylamine. Residues 120–139 are Cytoplasmic-facing; that stretch reads DRYYAVCDPLRYKAKMNILV. Residues 140–161 form a helical membrane-spanning segment; the sequence is ICVMIFISWSVPAVFAFGMIFL. The Extracellular portion of the chain corresponds to 162-188; sequence ELNFKGAEEIYYKHVHCRGGCSVFFSK. The segment at 175-186 is extracellular Loop 2 (ECL2); sequence HVHCRGGCSVFF. A helical membrane pass occupies residues 189 to 211; sequence ISGVLTFMTSFYIPGSIMLCVYY. The Cytoplasmic portion of the chain corresponds to 212-249; that stretch reads RIYLIAKEQARLISDANQKLQIGLEMKNGISQSKERKA. The helical transmembrane segment at 250–273 threads the bilayer; that stretch reads VKTLGIVMGVFLICWCPFFICTVM. Over 274–286 the chain is Extracellular; sequence DPFLHYIIPPTLN. The chain crosses the membrane as a helical span at residues 287-307; the sequence is DVLIWFGYLNSTFNPMVYAFF. At 308–339 the chain is on the cytoplasmic side; that stretch reads YPWFRKALKMMLFGKIFQKDSSRCKLFLELSS.

This sequence belongs to the G-protein coupled receptor 1 family. As to expression, expressed at low level in both the central and peripheral nervous system. Moderately expressed in stomach. Low levels in amygdala, kidney, and lung, and small intestine. Trace amounts in cerebellum, dorsal root ganglia, hippocampus, hypothalamus, liver, medulla, pancreas, pituitary, pontine reticular formation, prostate, skeletal muscle and spleen.

Its subcellular location is the endomembrane system. It localises to the endoplasmic reticulum membrane. It is found in the cell membrane. Its activity is regulated as follows. Activated by SEP-363856 small molecule: IHCH-7179 acts both as an agonist activator for HTR1A and TAAR1. Functionally, intracellular G-protein coupled receptor for trace amines, which recognizes endogenous amine-containing metabolites such as beta-phenylethylamine (beta-PEA), 3-iodothyronamine (T1AM), isoamylamine (IAA), cadaverine (CAD), cyclohexylamine (CHA), p-tyramine (p-TYR), trimethylamine (TMA), octopamine and tryptamine. Also functions as a receptor for various drugs and psychoactive substances, such as amphetamine and methamphetamine. Unresponsive to classical biogenic amines, such as epinephrine and histamine and only partially activated by dopamine and serotonin. Expressed in both the central and peripheral nervous system: TAAR1 activation regulates the activity of several neurotransmitter signaling pathways by (1) decreasing the basal firing rates of the neurons involved and by (2) lowering the sensitivity of receptors to neurotransmitters. Ligand binding causes a conformation change that triggers signaling via guanine nucleotide-binding proteins (G proteins) and modulates the activity of downstream effectors. TAAR1 is coupled with different G(i)/G(o)-, G(s)- or G(q)/G(11) classes of G alpha proteins depending on the ligand. CAD-binding is coupled to G(i)/G(o) G alpha proteins and mediates inhibition of adenylate cyclase activity. T1AM- or beta-PEA-binding is coupled to G(s) G alpha proteins and mediates activation of adenylate cyclase activity. CHA- or IAA-binding is coupled to G(q)/G(11) G alpha proteins and activates phospholipase C-beta, releasing diacylglycerol (DAG) and inositol 1,4,5-trisphosphate (IP3) second messengers. TMA-binding is coupled with all three G(i)/G(o)-, G(s)- or G(q)/G(11) G alpha protein subtypes. Amphetamine-binding is coupled with G(s)- or G(12)/G(13) G alpha protein subtypes. The chain is Trace amine-associated receptor 1 from Homo sapiens (Human).